Consider the following 171-residue polypeptide: NADH-quinone oxidoreductase subunit I 2 (171 aa).

4Fe-4S ferredoxin-type domains lie at 39–71 (IVLTRDPDGQERCVACNLCAVACPVGCIDLSKA) and 81–110 (EHFRINFARCIFCGYCEEACPTAAIQLTPD). [4Fe-4S] cluster is bound by residues Cys-51, Cys-54, Cys-57, Cys-61, Cys-90, Cys-93, Cys-96, and Cys-100.

The protein belongs to the complex I 23 kDa subunit family. In terms of assembly, NDH-1 is composed of 14 different subunits. Subunits NuoA, H, J, K, L, M, N constitute the membrane sector of the complex. Requires [4Fe-4S] cluster as cofactor.

Its subcellular location is the cell inner membrane. It carries out the reaction a quinone + NADH + 5 H(+)(in) = a quinol + NAD(+) + 4 H(+)(out). In terms of biological role, NDH-1 shuttles electrons from NADH, via FMN and iron-sulfur (Fe-S) centers, to quinones in the respiratory chain. The immediate electron acceptor for the enzyme in this species is believed to be ubiquinone. Couples the redox reaction to proton translocation (for every two electrons transferred, four hydrogen ions are translocated across the cytoplasmic membrane), and thus conserves the redox energy in a proton gradient. The polypeptide is NADH-quinone oxidoreductase subunit I 2 (Rhodopseudomonas palustris (strain BisB18)).